The primary structure comprises 657 residues: Interferon-induced GTP-binding protein Mx1 (657 aa).

M1 bears the N-acetylmethionine mark. The 274-residue stretch at 63–336 (DLALPAIAVI…LITHICKTLP (274 aa)) folds into the Dynamin-type G domain. The G1 motif stretch occupies residues 73–80 (GDQSSGKS). Residue 73 to 80 (GDQSSGKS) coordinates GTP. Residues 98 to 100 (VTR) are G2 motif. A G3 motif region spans residues 174–177 (DLPG). Residues 174–178 (DLPGI) and 243–246 (TKPD) contribute to the GTP site. The segment at 243–246 (TKPD) is G4 motif. A G5 motif region spans residues 275-278 (KCRG). Positions 337-362 (LLENQIKENHEKITEELQKYGSDVPE) are bundle signaling element (BSE). Residues 362 to 529 (EDEHEKMFFL…HFQMEQIVYC (168 aa)) are middle domain. The tract at residues 363 to 627 (DEHEKMFFLI…KDTYSWLLKE (265 aa)) is stalk. The span at 540-551 (RVREKDSDEEKK) shows a compositional bias: basic and acidic residues. A disordered region spans residues 540–559 (RVREKDSDEEKKKKTSSMSH). Positions 550–553 (KKKK) are critical for lipid-binding. The 89-residue stretch at 569-657 (LSEILEHLLA…ARRRLAKFPG (89 aa)) folds into the GED domain.

This sequence belongs to the TRAFAC class dynamin-like GTPase superfamily. Dynamin/Fzo/YdjA family. Homooligomer. Oligomerizes into multimeric filamentous or ring-like structures by virtue of its stalk domain. Oligomerization is critical for GTPase activity, protein stability, and recognition of viral target structures. Interacts with TRPC1, TRPC3, TRPC4, TRPC5, TRPC6 and TRPC7. Interacts with HSPA5. Interacts with TUBB/TUBB5. Interacts with DDX39A and DDX39B. ISGylated.

Its subcellular location is the cytoplasm. It is found in the endoplasmic reticulum membrane. The protein resides in the perinuclear region. Interferon-induced dynamin-like GTPase with antiviral activity. The chain is Interferon-induced GTP-binding protein Mx1 (MX1) from Canis lupus familiaris (Dog).